The sequence spans 580 residues: Rap guanine nucleotide exchange factor 5 (580 aa).

In terms of domain architecture, N-terminal Ras-GEF spans 68 to 201; sequence DRYVVVSGTP…ELKEFQKILG (134 aa). One can recognise a Ras-GEF domain in the interval 345 to 579; it reads NTWDLALELM…FELSHRIEPR (235 aa).

Widely expressed with highest levels in brain.

Its subcellular location is the nucleus. Guanine nucleotide exchange factor (GEF) for RAP1A, RAP2A and MRAS/M-Ras-GTP. Its association with MRAS inhibits Rap1 activation. The protein is Rap guanine nucleotide exchange factor 5 (RAPGEF5) of Homo sapiens (Human).